A 390-amino-acid chain; its full sequence is LL-diaminopimelate aminotransferase 2 (390 aa).

Residues Y13 and G38 each contribute to the substrate site. Pyridoxal 5'-phosphate contacts are provided by residues Y67, 102-103 (SK), Y127, N177, Y208, and 236-238 (SLS). Substrate-binding residues include K103, Y127, and N177. At K239 the chain carries N6-(pyridoxal phosphate)lysine. R247 contacts pyridoxal 5'-phosphate. R365 contributes to the substrate binding site.

It belongs to the class-I pyridoxal-phosphate-dependent aminotransferase family. LL-diaminopimelate aminotransferase subfamily. In terms of assembly, homodimer. It depends on pyridoxal 5'-phosphate as a cofactor.

It carries out the reaction (2S,6S)-2,6-diaminopimelate + 2-oxoglutarate = (S)-2,3,4,5-tetrahydrodipicolinate + L-glutamate + H2O + H(+). It functions in the pathway amino-acid biosynthesis; L-lysine biosynthesis via DAP pathway; LL-2,6-diaminopimelate from (S)-tetrahydrodipicolinate (aminotransferase route): step 1/1. Involved in the synthesis of meso-diaminopimelate (m-DAP or DL-DAP), required for both lysine and peptidoglycan biosynthesis. Catalyzes the direct conversion of tetrahydrodipicolinate to LL-diaminopimelate. This chain is LL-diaminopimelate aminotransferase 2, found in Nostoc sp. (strain PCC 7120 / SAG 25.82 / UTEX 2576).